We begin with the raw amino-acid sequence, 495 residues long: 3-octaprenyl-4-hydroxybenzoate carboxy-lyase (495 aa).

N172 is a Mn(2+) binding site. Prenylated FMN-binding positions include 175–177 (IYR), 189–191 (RWL), and 194–195 (RG). E238 is a binding site for Mn(2+). The active-site Proton donor is the D287.

This sequence belongs to the UbiD family. As to quaternary structure, homohexamer. The cofactor is prenylated FMN. Mn(2+) serves as cofactor.

The protein localises to the cell membrane. It carries out the reaction a 4-hydroxy-3-(all-trans-polyprenyl)benzoate + H(+) = a 2-(all-trans-polyprenyl)phenol + CO2. The protein operates within cofactor biosynthesis; ubiquinone biosynthesis. Catalyzes the decarboxylation of 3-octaprenyl-4-hydroxy benzoate to 2-octaprenylphenol, an intermediate step in ubiquinone biosynthesis. This Yersinia pseudotuberculosis serotype O:1b (strain IP 31758) protein is 3-octaprenyl-4-hydroxybenzoate carboxy-lyase.